A 549-amino-acid chain; its full sequence is Undecaprenyl phosphate-alpha-4-amino-4-deoxy-L-arabinose arabinosyl transferase 1 (549 aa).

Helical transmembrane passes span 9–29, 80–102, 112–132, 133–153, 176–196, 204–224, 257–277, 290–310, 312–332, 342–362, 377–397, and 402–422; these read LLLIAFGLFYLLPLATHGLWI, LFGVRVASALSTGLSVVLAYLLA, SLASALLYMSFTVVALQAGYA, NLDPQFTFWVNLSLVALWFTF, FMTKGFLAWLLPVLVALPYAI, LLIYGGIGVLVAILISLPWAL, WWYYLPLLVGFSVPWVLLLPA, SSGFLLLWLVLPLAFFSLSKG, LPAYILPCLLPLALLMGNTLV, LLAFNGVLNLVAGLLGLLALV, HLVLVYVLLLGWILSNLLQAM, and LWAAPALGSFLLVALAPAALP.

The protein belongs to the glycosyltransferase 83 family.

It localises to the cell inner membrane. It carries out the reaction 4-amino-4-deoxy-alpha-L-arabinopyranosyl di-trans,octa-cis-undecaprenyl phosphate + lipid IVA = lipid IIA + di-trans,octa-cis-undecaprenyl phosphate.. Its pathway is lipopolysaccharide metabolism; 4-amino-4-deoxy-beta-L-arabinose-lipid A biosynthesis. In terms of biological role, catalyzes the transfer of the L-Ara4N moiety of the glycolipid undecaprenyl phosphate-alpha-L-Ara4N to lipid A. The modified arabinose is attached to lipid A and is required for resistance to polymyxin and cationic antimicrobial peptides. This is Undecaprenyl phosphate-alpha-4-amino-4-deoxy-L-arabinose arabinosyl transferase 1 from Pseudomonas fluorescens (strain ATCC BAA-477 / NRRL B-23932 / Pf-5).